Reading from the N-terminus, the 99-residue chain is Acylphosphatase (99 aa).

The 86-residue stretch at 14–99 folds into the Acylphosphatase-like domain; it reads AVDVTVTGRV…DQGLRSFGVR (86 aa). Catalysis depends on residues Arg29 and Asn47.

Belongs to the acylphosphatase family.

The enzyme catalyses an acyl phosphate + H2O = a carboxylate + phosphate + H(+). The polypeptide is Acylphosphatase (acyP) (Nocardioides sp. (strain ATCC BAA-499 / JS614)).